The chain runs to 256 residues: Small ribosomal subunit protein eS1 (256 aa).

Residue A2 is modified to N-acetylalanine; partial.

The protein belongs to the eukaryotic ribosomal protein eS1 family. In terms of assembly, component of the small ribosomal subunit. Mature ribosomes consist of a small (40S) and a large (60S) subunit. The 40S subunit contains about 33 different proteins and 1 molecule of RNA (18S). The 60S subunit contains about 49 different proteins and 3 molecules of RNA (25S, 5.8S and 5S).

The protein resides in the cytoplasm. In Komagataella phaffii (strain GS115 / ATCC 20864) (Yeast), this protein is Small ribosomal subunit protein eS1.